We begin with the raw amino-acid sequence, 96 residues long: Pyrimidine/purine nucleoside phosphorylase (96 aa).

Belongs to the nucleoside phosphorylase PpnP family.

The catalysed reaction is a purine D-ribonucleoside + phosphate = a purine nucleobase + alpha-D-ribose 1-phosphate. It catalyses the reaction adenosine + phosphate = alpha-D-ribose 1-phosphate + adenine. It carries out the reaction cytidine + phosphate = cytosine + alpha-D-ribose 1-phosphate. The enzyme catalyses guanosine + phosphate = alpha-D-ribose 1-phosphate + guanine. The catalysed reaction is inosine + phosphate = alpha-D-ribose 1-phosphate + hypoxanthine. It catalyses the reaction thymidine + phosphate = 2-deoxy-alpha-D-ribose 1-phosphate + thymine. It carries out the reaction uridine + phosphate = alpha-D-ribose 1-phosphate + uracil. The enzyme catalyses xanthosine + phosphate = alpha-D-ribose 1-phosphate + xanthine. Its function is as follows. Catalyzes the phosphorolysis of diverse nucleosides, yielding D-ribose 1-phosphate and the respective free bases. Can use uridine, adenosine, guanosine, cytidine, thymidine, inosine and xanthosine as substrates. Also catalyzes the reverse reactions. The protein is Pyrimidine/purine nucleoside phosphorylase of Erwinia tasmaniensis (strain DSM 17950 / CFBP 7177 / CIP 109463 / NCPPB 4357 / Et1/99).